The sequence spans 394 residues: MATAQLQRTPMSALVFPNKISTEHQSLVLVKRLLAVSVSCITYLRGIFPECAYGTRYLDDLCVKILREDKNCPGSTQLVKWMLGCYDALQKKYLRMVVLAVYTNPEDPQTISECYQFKFKYTNNGPLMDFISKNQSNESSMLSTDTKKASILLIRKIYILMQNLGPLPNDVCLTMKLFYYDEVTPPDYQPPGFKDGDCEGVIFEGEPMYLNVGEVSTPFHIFKVKVTTERERMENIDSTILSPKQIKTPFQKILRDKDVEDEQEHYTSDDLDIETKMEEQEKNPASSELEEPSLVCEEDEIMRSKESPDLSISHSQVEQLVNKTSELDMSESKTRSGKVFQNKMANGNQPVKSSKENRKRSQHESGRIVLHHFDSSSQESVPKRRKFSEPKEHI.

Residues 24 to 226 form the HORMA domain; sequence HQSLVLVKRL…TPFHIFKVKV (203 aa). The segment covering 253–282 has biased composition (basic and acidic residues); the sequence is ILRDKDVEDEQEHYTSDDLDIETKMEEQEK. A disordered region spans residues 253–394; it reads ILRDKDVEDE…RKFSEPKEHI (142 aa). The span at 288–300 shows a compositional bias: acidic residues; sequence ELEEPSLVCEEDE. Composition is skewed to polar residues over residues 310-324 and 343-352; these read LSIS…VNKT and KMANGNQPVK. A compositionally biased stretch (basic and acidic residues) spans 362–374; sequence QHESGRIVLHHFD. S376 carries the post-translational modification Phosphoserine. Positions 383–386 match the Nuclear localization signal motif; sequence KRRK.

Interacts with HORMAD2. Interacts with IHO1. In terms of processing, phosphorylated at Ser-377 in a SPO11-dependent manner. As to expression, testis-specific. Over-expressed in carcinomas.

Its subcellular location is the nucleus. It localises to the chromosome. Functionally, plays a key role in meiotic progression. Regulates 3 different functions during meiosis: ensures that sufficient numbers of processed DNA double-strand breaks (DSBs) are available for successful homology search by increasing the steady-state numbers of single-stranded DSB ends. Promotes synaptonemal-complex formation independently of its role in homology search. Plays a key role in the male mid-pachytene checkpoint and the female meiotic prophase checkpoint: required for efficient build-up of ATR activity on unsynapsed chromosome regions, a process believed to form the basis of meiotic silencing of unsynapsed chromatin (MSUC) and meiotic prophase quality control in both sexes. The sequence is that of HORMA domain-containing protein 1 from Homo sapiens (Human).